A 294-amino-acid polypeptide reads, in one-letter code: Probable cobalamin biosynthesis protein CobD (294 aa).

Transmembrane regions (helical) follow at residues A52–F72, Y73–I93, D145–Y165, and I268–V288.

The protein belongs to the CobD/CbiB family.

The protein resides in the cell membrane. It functions in the pathway cofactor biosynthesis; adenosylcobalamin biosynthesis. In terms of biological role, converts cobyric acid to cobinamide by the addition of aminopropanol on the F carboxylic group. In Thermococcus kodakarensis (strain ATCC BAA-918 / JCM 12380 / KOD1) (Pyrococcus kodakaraensis (strain KOD1)), this protein is Probable cobalamin biosynthesis protein CobD.